The following is a 332-amino-acid chain: C4-dicarboxylate-binding periplasmic protein DctP (332 aa).

An N-terminal signal peptide occupies residues 1 to 22 (MFKPLTLIAASILAVTSFNAAA).

Belongs to the bacterial solute-binding protein 7 family. In terms of assembly, the complex comprises the extracytoplasmic solute receptor protein DctP, and the two transmembrane proteins DctQ and DctM.

It is found in the periplasm. Its function is as follows. Part of the tripartite ATP-independent periplasmic (TRAP) transport system DctPQM involved in C4-dicarboxylates uptake. In Vibrio cholerae serotype O1 (strain ATCC 39315 / El Tor Inaba N16961), this protein is C4-dicarboxylate-binding periplasmic protein DctP.